The following is a 27-amino-acid chain: 23S rRNA methylase leader peptide (27 aa).

Functionally, this peptide is involved in the control mechanism of the synthesis of the erythromycin resistance protein. The chain is 23S rRNA methylase leader peptide (ermC) from Enterococcus faecalis (Streptococcus faecalis).